Consider the following 934-residue polypeptide: Palmitoyltransferase ZDHHC8 (934 aa).

At 1–9 (MPKCDVKTR) the chain is on the cytoplasmic side. A helical membrane pass occupies residues 10-30 (YIPATFAWIVLLLTTFLFFFY). The Extracellular portion of the chain corresponds to 31 to 47 (PCQFYVKSHPWVLAYQG). The chain crosses the membrane as a helical span at residues 48-68 (VITFFVLANFTLATFMDPGII). Residues 69 to 142 (PKASPDEDCE…NNCIGRRNYR (74 aa)) are Cytoplasmic-facing. The 51-residue stretch at 99 to 149 (KWCVTCKFYRPPRCSHCSVCNHCIETFDHHCPWVNNCIGRRNYRFFFFFLV) folds into the DHHC domain. Cys129 (S-palmitoyl cysteine intermediate) is an active-site residue. A helical membrane pass occupies residues 143-163 (FFFFFLVSLSIHMLSIFSLCL). The Extracellular portion of the chain corresponds to 164 to 177 (VYVLKIMPNIKDTA). The chain crosses the membrane as a helical span at residues 178–198 (PIVAIILMGLVTILAIPIFGL). The Cytoplasmic segment spans residues 199–934 (TGFHMVLVSR…IYDMNYEISV (736 aa)). 6 disordered regions span residues 336–440 (NGYN…GYTS), 506–525 (MASP…RRPD), 669–705 (QRGV…SGIG), 751–780 (QQQQ…TMPQ), 835–862 (PNPM…TPTR), and 881–934 (LEQQ…EISV). 2 stretches are compositionally biased toward polar residues: residues 337-349 (GYNQ…TLYS) and 381-394 (RHNS…QVSD). The segment covering 397–411 (GLNGSVSTGGGGGGD) has biased composition (gly residues). Residues 415–429 (HMRLYHPRHSPHARP) show a composition bias toward basic residues. 2 stretches are compositionally biased toward low complexity: residues 688–705 (QQQQ…SGIG) and 751–765 (QQQQ…AAAA). A compositionally biased stretch (polar residues) spans 768 to 780 (HRSNPTSPTTMPQ). Residues 910–919 (MQSNASNSGT) show a composition bias toward polar residues.

The protein belongs to the DHHC palmitoyltransferase family. ERF2/ZDHHC9 subfamily.

It is found in the golgi apparatus membrane. The protein localises to the cell membrane. It catalyses the reaction L-cysteinyl-[protein] + hexadecanoyl-CoA = S-hexadecanoyl-L-cysteinyl-[protein] + CoA. Functionally, palmitoyltransferase that catalyzes the addition of palmitate onto various protein substrates and therefore functions in several unrelated biological processes. Regulates tissue growth possibly by regulating Ras64B protein stability. May regulate CG34450 mRNA levels. This chain is Palmitoyltransferase ZDHHC8, found in Drosophila melanogaster (Fruit fly).